A 299-amino-acid chain; its full sequence is ATP phosphoribosyltransferase (299 aa).

This sequence belongs to the ATP phosphoribosyltransferase family. Long subfamily. Equilibrium between an active dimeric form, an inactive hexameric form and higher aggregates. Interconversion between the various forms is largely reversible and is influenced by the natural substrates and inhibitors of the enzyme. Mg(2+) is required as a cofactor.

It localises to the cytoplasm. The enzyme catalyses 1-(5-phospho-beta-D-ribosyl)-ATP + diphosphate = 5-phospho-alpha-D-ribose 1-diphosphate + ATP. The protein operates within amino-acid biosynthesis; L-histidine biosynthesis; L-histidine from 5-phospho-alpha-D-ribose 1-diphosphate: step 1/9. With respect to regulation, feedback inhibited by histidine. Catalyzes the condensation of ATP and 5-phosphoribose 1-diphosphate to form N'-(5'-phosphoribosyl)-ATP (PR-ATP). Has a crucial role in the pathway because the rate of histidine biosynthesis seems to be controlled primarily by regulation of HisG enzymatic activity. In Salmonella agona (strain SL483), this protein is ATP phosphoribosyltransferase.